The primary structure comprises 314 residues: Ribosomal protein L11 methyltransferase (314 aa).

S-adenosyl-L-methionine contacts are provided by Thr164, Gly185, Asp207, and Asn249.

It belongs to the methyltransferase superfamily. PrmA family.

It localises to the cytoplasm. The enzyme catalyses L-lysyl-[protein] + 3 S-adenosyl-L-methionine = N(6),N(6),N(6)-trimethyl-L-lysyl-[protein] + 3 S-adenosyl-L-homocysteine + 3 H(+). Its function is as follows. Methylates ribosomal protein L11. This is Ribosomal protein L11 methyltransferase from Clostridium beijerinckii (strain ATCC 51743 / NCIMB 8052) (Clostridium acetobutylicum).